The sequence spans 474 residues: Glutamine synthetase (474 aa).

The GS beta-grasp domain maps to 15-99 (EDVQFIDVRF…MTFFIHDPIT (85 aa)). Positions 107–474 (PRNIAKKAET…PYEFTLYYDI (368 aa)) constitute a GS catalytic domain. Glu132 and Glu134 together coordinate Mg(2+). ATP is bound at residue Glu210. Glu215 and Glu223 together coordinate Mg(2+). L-glutamate-binding positions include 267-268 (NG) and Gly268. Residue His272 coordinates Mg(2+). Residues 274–276 (HSS) and Ser276 each bind ATP. The L-glutamate site is built by Arg325, Glu331, and Arg343. Positions 343, 348, and 357 each coordinate ATP. Glu362 is a binding site for Mg(2+). Arg364 contributes to the L-glutamate binding site. Tyr402 is subject to O-AMP-tyrosine.

The protein belongs to the glutamine synthetase family. In terms of assembly, oligomer of 12 subunits arranged in the form of two hexagons. Mg(2+) is required as a cofactor.

The protein localises to the cytoplasm. The enzyme catalyses L-glutamate + NH4(+) + ATP = L-glutamine + ADP + phosphate + H(+). Its activity is regulated as follows. The activity of this enzyme could be controlled by adenylation under conditions of abundant glutamine. Catalyzes the ATP-dependent biosynthesis of glutamine from glutamate and ammonia. The protein is Glutamine synthetase of Frankia alni.